A 149-amino-acid polypeptide reads, in one-letter code: MKEAFKEALARFASGVTVVAARLGEEERGMTATAFMSLSLEPPLVALAVSERAKLLPVLEGAGAFTVSLLREGQEAVSEHFAGRPKEGIALEEGRVKGALAVLRCRLHALYPGGDHRIVVGLVEEVELGEEGPPLVYFQRGYRRLVWPS.

Glu27–Ala34 is a binding site for FAD. Ser37 is an NAD(+) binding site. Residues Ala48–Ser50, Lys54–Leu55, and His80 each bind FAD. NAD(+) is bound by residues His116 and Tyr137 to Arg140.

The protein belongs to the non-flavoprotein flavin reductase family. HpaC subfamily. In terms of assembly, homodimer. 4-HPA 3-monooxygenase consists of a reductase component HpaC and an oxygenase component HpaB.

The enzyme catalyses a reduced flavin + NAD(+) = an oxidized flavin + NADH + 2 H(+). Its pathway is aromatic compound metabolism; 4-hydroxyphenylacetate degradation; pyruvate and succinate semialdehyde from 4-hydroxyphenylacetate: step 1/7. In terms of biological role, catalyzes the reduction of free flavins (FMN, FAD and riboflavin) by NADH. Subsequently, the reduced flavins diffuse to the large HpaB component. It utilizes NADH, but not NADPH as an electron donor, and both FAD and FMN as electron acceptors. The chain is 4-hydroxyphenylacetate 3-monooxygenase, reductase component from Thermus thermophilus (strain ATCC 27634 / DSM 579 / HB8).